A 142-amino-acid chain; its full sequence is Ctenidin-3 (142 aa).

The signal sequence occupies residues 1–19; that stretch reads MKHLIPLIVMASVVLAVYA. Position 139 is a tyrosine amide (Y139).

As to expression, expressed in hemocytes (at protein level).

Its subcellular location is the secreted. In terms of biological role, antimicrobial protein with bacteriostatic activity against the Gram-negative bacterium E.coli, and very weak activity against the Gram-positive bacterium S.aureus. Lacks activity against the yeast C.albicans. The sequence is that of Ctenidin-3 from Cupiennius salei (American wandering spider).